A 463-amino-acid chain; its full sequence is Cis-zeatin O-glucosyltransferase 2 (463 aa).

H21 (proton acceptor) is an active-site residue. 2 residues coordinate an anthocyanidin: H21 and N91. Residue D127 is the Charge relay of the active site. UDP-alpha-D-glucose-binding residues include A339, Q341, H356, W359, N360, S361, E364, D380, and Q381.

Belongs to the UDP-glycosyltransferase family. In terms of tissue distribution, highly expressed in root. Expressed at much lower level in kernel. Weakly or not expressed in expressed in stems and leaves.

It carries out the reaction cis-zeatin + UDP-alpha-D-glucose = O-beta-D-glucosyl-cis-zeatin + UDP + H(+). Utilizes UDP-glucose as the sugar donor and catalyzes the formation of O-beta-D-glucosyl-cis-zeatin from cis-zeatin. May regulate active versus storage forms of cytokinins and could have an impact on seed growth. The polypeptide is Cis-zeatin O-glucosyltransferase 2 (Zea mays (Maize)).